A 752-amino-acid polypeptide reads, in one-letter code: DNA topoisomerase 4 subunit A (752 aa).

The 464-residue stretch at 31–494 folds into the Topo IIA-type catalytic domain; that stretch reads LPFIGDGLKP…EAKAMSEHDM (464 aa). The active-site O-(5'-phospho-DNA)-tyrosine intermediate is the Tyr120. Disordered regions lie at residues 472–492 and 718–752; these read YGDD…MSEH and TGER…DSEE. Composition is skewed to basic and acidic residues over residues 473-492 and 732-743; these read GDDR…MSEH and QRIDRVEIDSPR.

It belongs to the type II topoisomerase GyrA/ParC subunit family. ParC type 1 subfamily. In terms of assembly, heterotetramer composed of ParC and ParE.

It localises to the cell membrane. It catalyses the reaction ATP-dependent breakage, passage and rejoining of double-stranded DNA.. Topoisomerase IV is essential for chromosome segregation. It relaxes supercoiled DNA. Performs the decatenation events required during the replication of a circular DNA molecule. The protein is DNA topoisomerase 4 subunit A of Escherichia coli O157:H7.